The chain runs to 1461 residues: Periaxin (1461 aa).

At S7 the chain carries Phosphoserine. The PDZ domain occupies 16 to 99 (LVEIIVETEA…YKVSFCLKRT (84 aa)). A Nuclear export signal motif is present at residues 70 to 84 (VFFENFKYEDALRLL). A Nuclear localization signal motif is present at residues 118-196 (KGPRAKVAKL…RLQLPRLRVR (79 aa)). S133 is modified (phosphoserine). A run of 55 repeats spans residues 431-435 (GPEVK), 439-443 (GPEVK), 447-451 (APEVK), 455-459 (VPEAA), 463-467 (VRLPE), 468-472 (VELPK), 473-477 (VSEMK), 481-485 (VPEMA), 486-490 (VPEVR), 494-498 (VELPK), 499-503 (VSEMK), 507-511 (VPEMA), 512-516 (VPEVR), 520-524 (VQLLK), 525-529 (VSEMK), 533-537 (VPEMA), 538-542 (VPEVR), 546-550 (VQLPK), 551-555 (VSEMK), 559-563 (VSEVA), 564-568 (VPEVR), 572-576 (VQLPK), 577-581 (VPEMK), 582-586 (VPEMK), 590-594 (VPEMK), 595-599 (LPEMK), 600-604 (LPEVQ), 608-612 (VPEMA), 613-617 (VPDVH), 618-622 (LPEVQ), 626-630 (VPEMK), 631-635 (LPEMK), 636-640 (LPEVK), 644-648 (VPEMA), 649-653 (VPDVH), 654-658 (LPEVQ), 662-666 (VPEMK), 670-674 (MPEMA), 675-679 (VPEVR), 683-687 (VQLPK), 688-692 (VSEMK), 696-700 (VPEMA), 701-705 (VPDVH), 706-710 (LPEVQ), 714-718 (VCEMK), 719-723 (VPDMK), 724-728 (LPEIK), 732-736 (VPEMA), 737-741 (VPDVH), 742-746 (LPEVQ), 750-754 (VSEIR), 755-759 (LPEMQ), 760-764 (VPKVP), 771-775 (APEVK), and 779-783 (APEVQ). Residues 431 to 783 (GPEVKVPKGP…VKLPRAPEVQ (353 aa)) are 55 X 5 AA approximate tandem repeats of [LVMAG]-[PSREQC]-[EDKL]-[LIVMAP]-[AQKHRPE]; that may have a tripeptide spacer of [LV]-P-[KER]. Phosphoserine occurs at positions 900 and 1082. Over residues 1318 to 1327 (EGAEEGEKAK) the composition is skewed to basic and acidic residues. The tract at residues 1318–1461 (EGAEEGEKAK…RMEGAQAAAV (144 aa)) is disordered. S1349, S1351, S1363, S1401, S1407, and S1439 each carry phosphoserine. The span at 1352–1363 (PEEEEEEEEEGS) shows a compositional bias: acidic residues.

It belongs to the periaxin family. In terms of assembly, homodimer (via PDZ domain). Interacts with SCN10A. Found in a complex with SCN10A. Interacts with DRP2. Identified in a dystroglycan complex that contains at least PRX, DRP2, UTRN, DMD and DAG1. Detected in a complex composed of at least EZR, AHNAK, PPL and PRX. Identified in a complex with EZR, AHNAK, BFSP1, BFSP2, ANK2, PLEC, VIM and spectrin. As to expression, detected in spinal cord. Isoform 1 and isoform 2 are found in sciatic nerve and Schwann cells.

Its subcellular location is the cell membrane. It is found in the nucleus. The protein localises to the cytoplasm. It localises to the cell junction. Its function is as follows. Scaffolding protein that functions as part of a dystroglycan complex in Schwann cells, and as part of EZR and AHNAK-containing complexes in eye lens fiber cells. Required for the maintenance of the peripheral myelin sheath that is essential for normal transmission of nerve impulses and normal perception of sensory stimuli. Required for normal transport of MBP mRNA from the perinuclear to the paranodal regions. Required for normal remyelination after nerve injury. Required for normal elongation of Schwann cells and normal length of the internodes between the nodes of Ranvier. The demyelinated nodes of Ranvier permit saltatory transmission of nerve impulses; shorter internodes cause slower transmission of nerve impulses. Required for the formation of appositions between the abaxonal surface of the myelin sheath and the Schwann cell plasma membrane; the Schwann cell cytoplasm is restricted to regions between these appositions. Required for the formation of Cajal bands and of Schmidt-Lanterman incisures that correspond to short, cytoplasm-filled regions on myelinated nerves. Recruits DRP2 to the Schwann cell plasma membrane. Required for normal protein composition of the eye lens fiber cell plasma membrane and normal eye lens fiber cell morphology. This Homo sapiens (Human) protein is Periaxin (PRX).